Here is a 285-residue protein sequence, read N- to C-terminus: MSAPILRKLADLRAATAGWKRAGESIGVVPTMGALHDGHLSLVAAAKAGCDRVVVTIFVNPKQFNNPEDLAKYPRTELADASKLAPYGVDAIYVPDPDQIYPEGFATTVSVSGLTDVMEGACRPGHFDGVATVVAKLFLQTGADQAYFGEKDYQQMMLVTRMAQDLDIPITVVGCPTVREASGLAMSSRNMRLSAEGLERAGRLHPVMRQVAERLAAGASFGDLAPGAREALGAAGFVDIEYFDLRAADSLRALDRPTEPARLLVAAWLDGVRLIDNIAVSQLND.

An ATP-binding site is contributed by 32–39 (MGALHDGH). Residue His-39 is the Proton donor of the active site. Gln-63 serves as a coordination point for (R)-pantoate. Gln-63 is a beta-alanine binding site. 149 to 152 (GEKD) provides a ligand contact to ATP. Residue Gln-155 coordinates (R)-pantoate. ATP contacts are provided by residues Val-178 and 186–189 (MSSR).

It belongs to the pantothenate synthetase family. Homodimer.

It is found in the cytoplasm. The catalysed reaction is (R)-pantoate + beta-alanine + ATP = (R)-pantothenate + AMP + diphosphate + H(+). The protein operates within cofactor biosynthesis; (R)-pantothenate biosynthesis; (R)-pantothenate from (R)-pantoate and beta-alanine: step 1/1. In terms of biological role, catalyzes the condensation of pantoate with beta-alanine in an ATP-dependent reaction via a pantoyl-adenylate intermediate. The protein is Pantothenate synthetase of Ruegeria pomeroyi (strain ATCC 700808 / DSM 15171 / DSS-3) (Silicibacter pomeroyi).